Reading from the N-terminus, the 482-residue chain is tRNA sulfurtransferase (482 aa).

One can recognise a THUMP domain in the interval 61-165; sequence LAIRDALTRI…DDRLLLIKGR (105 aa). ATP is bound by residues 183-184, Lys265, Gly287, and Gln296; that span reads LI. Cys344 and Cys456 are oxidised to a cystine. In terms of domain architecture, Rhodanese spans 404–482; that stretch reads FGPNDVILDI…GFNNVKVYRP (79 aa). Cys456 acts as the Cysteine persulfide intermediate in catalysis.

This sequence belongs to the ThiI family.

The protein localises to the cytoplasm. It catalyses the reaction [ThiI sulfur-carrier protein]-S-sulfanyl-L-cysteine + a uridine in tRNA + 2 reduced [2Fe-2S]-[ferredoxin] + ATP + H(+) = [ThiI sulfur-carrier protein]-L-cysteine + a 4-thiouridine in tRNA + 2 oxidized [2Fe-2S]-[ferredoxin] + AMP + diphosphate. The catalysed reaction is [ThiS sulfur-carrier protein]-C-terminal Gly-Gly-AMP + S-sulfanyl-L-cysteinyl-[cysteine desulfurase] + AH2 = [ThiS sulfur-carrier protein]-C-terminal-Gly-aminoethanethioate + L-cysteinyl-[cysteine desulfurase] + A + AMP + 2 H(+). The protein operates within cofactor biosynthesis; thiamine diphosphate biosynthesis. Its function is as follows. Catalyzes the ATP-dependent transfer of a sulfur to tRNA to produce 4-thiouridine in position 8 of tRNAs, which functions as a near-UV photosensor. Also catalyzes the transfer of sulfur to the sulfur carrier protein ThiS, forming ThiS-thiocarboxylate. This is a step in the synthesis of thiazole, in the thiamine biosynthesis pathway. The sulfur is donated as persulfide by IscS. The protein is tRNA sulfurtransferase of Escherichia coli (strain ATCC 8739 / DSM 1576 / NBRC 3972 / NCIMB 8545 / WDCM 00012 / Crooks).